A 275-amino-acid polypeptide reads, in one-letter code: NAD kinase (275 aa).

The Proton acceptor role is filled by D66. NAD(+) is bound by residues 66-67, 138-139, H168, D170, 181-186, and V205; these read DG, NE, and TAYNLS.

Belongs to the NAD kinase family. It depends on a divalent metal cation as a cofactor.

It is found in the cytoplasm. It catalyses the reaction NAD(+) + ATP = ADP + NADP(+) + H(+). Functionally, involved in the regulation of the intracellular balance of NAD and NADP, and is a key enzyme in the biosynthesis of NADP. Catalyzes specifically the phosphorylation on 2'-hydroxyl of the adenosine moiety of NAD to yield NADP. This chain is NAD kinase, found in Halorubrum lacusprofundi (strain ATCC 49239 / DSM 5036 / JCM 8891 / ACAM 34).